A 619-amino-acid polypeptide reads, in one-letter code: 4-hydroxyphenylalkanoate adenylyltransferase (619 aa).

This sequence belongs to the ATP-dependent AMP-binding enzyme family.

It catalyses the reaction 17-(4-hydroxyphenyl)heptadecanoate + holo-[(phenol)carboxyphthiodiolenone synthase] + ATP = 17-(4-hydroxyphenyl)heptadecanoyl-[(phenol)carboxyphthiodiolenone synthase] + AMP + diphosphate. The catalysed reaction is 19-(4-hydroxyphenyl)nonadecanoate + holo-[(phenol)carboxyphthiodiolenone synthase] + ATP = 19-(4-hydroxyphenyl)nonadecanoyl-[(phenol)carboxyphthiodiolenone synthase] + AMP + diphosphate. It participates in lipid metabolism; fatty acid biosynthesis. Catalyzes the activation of long-chain fatty acids as acyl-adenylates (acyl-AMP), which are then transferred to the multifunctional polyketide synthase PpsA for further chain extension. Involved in the biosynthesis of phenolphthiocerol, which is an important intermediate in the biosynthesis of phenolic glycolipid (PGL), also called mycosid B. The protein is 4-hydroxyphenylalkanoate adenylyltransferase (fadD29) of Mycobacterium bovis (strain ATCC BAA-935 / AF2122/97).